Consider the following 310-residue polypeptide: MPRTDNDTWDLSTSVGATATMVAAARAIATNADNPLIEDRFAEPLVRAVGVDFFTRWVTGDLVAADVDDHDSGWKLEHMPVAMAARTRFFDSFFQAATQAGIRQAVILASGLDARAYRLAWPAGTTVFEIDQPQVIEFKTATLAKLGATPQATLRTVAVDLRDDWPKALVEAGFDKGQPTAWIAEGLFGYLPPEAQDRLLDNITALSADGSRLACEAIPDMSEVDTEKAQEMMRRATAKWREHGFDLEFGDLGYQGERNDVAEYLDGLGWRSVGVPMSQLLADAGLEAIPQTNDSVSVADTIYYSSVLAK.

Residues aspartate 131 and 160-161 contribute to the S-adenosyl-L-methionine site; that span reads DL.

The protein belongs to the UPF0677 family.

Exhibits S-adenosyl-L-methionine-dependent methyltransferase activity. In Mycolicibacterium paratuberculosis (strain ATCC BAA-968 / K-10) (Mycobacterium paratuberculosis), this protein is Putative S-adenosyl-L-methionine-dependent methyltransferase MAP_2076c.